The following is a 1006-amino-acid chain: DNA polymerase (1006 aa).

Belongs to the DNA polymerase type-B family. Interacts with OPG148. Component of the Uracil-DNA glycosylase(UDG)-OPG148-polymerase complex; OPG148 and OPG116/UDG form a heterodimeric processivity factor that associates with OPG071 to form the processive polymerase holoenzyme.

It carries out the reaction DNA(n) + a 2'-deoxyribonucleoside 5'-triphosphate = DNA(n+1) + diphosphate. In terms of biological role, catalyzes DNA synthesis. Acquires processivity by associating with a heterodimeric processivity factor comprised of the viral OPG148 and OPG116 proteins, thereby forming the DNA polymerase holoenzyme. Displays 3'- to 5' exonuclease activity. Might participate in viral DNA recombination. Does not perform OPG116/D4synthesis across an abasic site. In Monkeypox virus, this protein is DNA polymerase (OPG071).